The primary structure comprises 1501 residues: Inactive protein tyrosine kinase pTKL (1501 aa).

N-linked (GlcNAc...) asparagine glycosylation is found at N64, N128, and N133. The span at 204 to 221 (KKNKKNKKNKKKKNKKTK) shows a compositional bias: basic residues. The interval 204 to 223 (KKNKKNKKNKKKKNKKTKNT) is disordered. Residues N239, N242, N258, and N327 are each glycosylated (N-linked (GlcNAc...) asparagine). A compositionally biased stretch (basic and acidic residues) spans 257–273 (MNISLHEKNDKKNEKKN). The interval 257 to 276 (MNISLHEKNDKKNEKKNEKK) is disordered. The SAM domain maps to 301 to 366 (WSLREVIQWL…LQLIKNLQVM (66 aa)). The segment at 392–425 (NKNIKKGKNIKKEKKKKKEKNIKKEKKKKKKETK) is disordered. The span at 394–424 (NIKKGKNIKKEKKKKKEKNIKKEKKKKKKET) shows a compositional bias: basic residues. Residues 399–433 (KNIKKEKKKKKEKNIKKEKKKKKKETKKFNNMDKK) are a coiled coil. N-linked (GlcNAc...) asparagine glycosylation is found at N448, N463, and N471. An RVxF motif 1 motif is present at residues 483–486 (KVSF). N506 carries N-linked (GlcNAc...) asparagine glycosylation. Low complexity predominate over residues 543-597 (QLSSPLSSPLSSPSPSSSPSSSPSSSPSSSPSSSPSPSSSPSPSSSPSSSPSSSP). A disordered region spans residues 543–607 (QLSSPLSSPL…SSPPSPLSYK (65 aa)). N652 is a glycosylation site (N-linked (GlcNAc...) asparagine). Residues 659–678 (IKKSKSKYNNDKKEQKKLPL) are disordered. Basic and acidic residues predominate over residues 666–675 (YNNDKKEQKK). Residues N681, N712, N737, N811, and N819 are each glycosylated (N-linked (GlcNAc...) asparagine). Residues 836-844 (QNINNFGKY) and K864 contribute to the ATP site. N1024, N1031, N1074, and N1157 each carry an N-linked (GlcNAc...) asparagine glycan. The 396-residue stretch at 1088-1483 (FHYQHNVLCG…HILKTISTLY (396 aa)) folds into the Protein kinase domain. The short motif at 1238–1241 (KVLF) is the RVxF motif 2 element. An N-linked (GlcNAc...) asparagine glycan is attached at N1382.

Belongs to the protein kinase superfamily. TKL Ser/Thr protein kinase family. As to quaternary structure, interacts (via RVxF motif 1 and/or 2) with phosphatase PP1C. May interact (via SAM domain) with SERA5 (via C-terminus).

The protein localises to the parasitophorous vacuole. The protein resides in the host cell membrane. It is found in the host cytoplasm. It localises to the host cytoskeleton. The sequence is that of Inactive protein tyrosine kinase pTKL from Plasmodium falciparum (isolate 3D7).